Consider the following 292-residue polypeptide: uncharacterized protein (292 aa).

It is found in the virion. This is an uncharacterized protein from Acanthamoeba polyphaga (Amoeba).